A 990-amino-acid polypeptide reads, in one-letter code: Membrane alanyl aminopeptidase (990 aa).

An N-terminal signal peptide occupies residues 1–15; sequence FTIFLGVALLQGVLT. Positions 16–35 are cleaved as a propeptide — activation peptide; sequence LSPIPVPEEEWAEFSRMLRD. Asn-295 carries an N-linked (GlcNAc...) asparagine glycan. Residue 321–325 coordinates substrate; sequence GAMEN. His-357 is a binding site for Zn(2+). Catalysis depends on Glu-358, which acts as the Proton acceptor. Zn(2+) contacts are provided by His-361 and Glu-380. Residues Asn-609, Asn-623, and Asn-752 are each glycosylated (N-linked (GlcNAc...) asparagine). Gly-968 carries GPI-anchor amidated glycine lipidation. The propeptide at 969–990 is removed in mature form; it reads SGNIAALSVVSLLVTLAINMVA.

Belongs to the peptidase M1 family. Zn(2+) serves as cofactor. As to expression, midgut brush-border membrane.

Its subcellular location is the cell membrane. Functionally, binds to the B.thuringiensis toxin, CryIA(C). This chain is Membrane alanyl aminopeptidase, found in Manduca sexta (Tobacco hawkmoth).